Here is a 77-residue protein sequence, read N- to C-terminus: MEFENQKFLVILITPMVLVLALDDFYVEEEFVINDKKLLRLVIEHIKEKGQIQKRKTQMPLIIHNTRYVLRHIKKYT.

The protein localises to the plastid. The protein resides in the cyanelle. This is an uncharacterized protein from Cyanophora paradoxa.